Here is a 393-residue protein sequence, read N- to C-terminus: Digeranylgeranylglycerophospholipid reductase (393 aa).

FAD contacts are provided by Ala-13, Asp-32, Cys-43, Ala-44, Gly-46, Arg-95, Val-119, Asp-274, and Gly-286. Residues Arg-327 and Gly-363 each coordinate a 2,3-bis-O-(geranylgeranyl)-sn-glycerol 1-phospholipid.

This sequence belongs to the geranylgeranyl reductase family. DGGGPL reductase subfamily. The cofactor is FAD.

The enzyme catalyses a 2,3-bis-O-phytanyl-sn-glycerol 1-phospholipid + 8 A = a 2,3-bis-O-(geranylgeranyl)-sn-glycerol 1-phospholipid + 8 AH2. It carries out the reaction 2,3-bis-O-(phytanyl)-sn-glycerol 1-phosphate + 8 A = 2,3-bis-O-(geranylgeranyl)-sn-glycerol 1-phosphate + 8 AH2. The catalysed reaction is CDP-2,3-bis-O-(geranylgeranyl)-sn-glycerol + 8 AH2 = CDP-2,3-bis-O-(phytanyl)-sn-glycerol + 8 A. It catalyses the reaction archaetidylserine + 8 AH2 = 2,3-bis-O-phytanyl-sn-glycero-3-phospho-L-serine + 8 A. The protein operates within membrane lipid metabolism; glycerophospholipid metabolism. Its function is as follows. Is involved in the reduction of 2,3-digeranylgeranylglycerophospholipids (unsaturated archaeols) into 2,3-diphytanylglycerophospholipids (saturated archaeols) in the biosynthesis of archaeal membrane lipids. Catalyzes the formation of archaetidic acid (2,3-di-O-phytanyl-sn-glyceryl phosphate) from 2,3-di-O-geranylgeranylglyceryl phosphate (DGGGP) via the hydrogenation of each double bond of the isoprenoid chains. Is also probably able to reduce double bonds of geranyl groups in CDP-2,3-bis-O-(geranylgeranyl)-sn-glycerol and archaetidylserine, thus acting at various stages in the biosynthesis of archaeal membrane lipids. The polypeptide is Digeranylgeranylglycerophospholipid reductase (Pyrococcus horikoshii (strain ATCC 700860 / DSM 12428 / JCM 9974 / NBRC 100139 / OT-3)).